The primary structure comprises 214 residues: Redox-sensing transcriptional repressor Rex (214 aa).

Residues 16-55 (LYYRYLIFLNDEGKEKVSSTELAEAVQVDSASIRRDFSYF) constitute a DNA-binding region (H-T-H motif). NAD(+) is bound at residue 90–95 (GVGNMG).

It belongs to the transcriptional regulatory Rex family. In terms of assembly, homodimer.

The protein localises to the cytoplasm. In terms of biological role, modulates transcription in response to changes in cellular NADH/NAD(+) redox state. The protein is Redox-sensing transcriptional repressor Rex of Lactobacillus gasseri (strain ATCC 33323 / DSM 20243 / BCRC 14619 / CIP 102991 / JCM 1131 / KCTC 3163 / NCIMB 11718 / NCTC 13722 / AM63).